A 348-amino-acid polypeptide reads, in one-letter code: Beta-hexosaminidase (348 aa).

Residues aspartate 64, arginine 72, arginine 138, and 168–169 (KH) contribute to the substrate site. The active-site Proton donor/acceptor is histidine 181. Aspartate 252 acts as the Nucleophile in catalysis.

This sequence belongs to the glycosyl hydrolase 3 family. NagZ subfamily.

Its subcellular location is the cytoplasm. The enzyme catalyses Hydrolysis of terminal non-reducing N-acetyl-D-hexosamine residues in N-acetyl-beta-D-hexosaminides.. It participates in cell wall biogenesis; peptidoglycan recycling. Its function is as follows. Plays a role in peptidoglycan recycling by cleaving the terminal beta-1,4-linked N-acetylglucosamine (GlcNAc) from peptide-linked peptidoglycan fragments, giving rise to free GlcNAc, anhydro-N-acetylmuramic acid and anhydro-N-acetylmuramic acid-linked peptides. This Nitrosomonas eutropha (strain DSM 101675 / C91 / Nm57) protein is Beta-hexosaminidase.